We begin with the raw amino-acid sequence, 651 residues long: Probable potassium transport system protein Kup (651 aa).

Helical transmembrane passes span 41-61, 82-102, 130-150, 163-183, 194-214, 235-255, 276-296, 309-329, 366-386, 395-415, 426-446, and 450-470; these read LVLGALGVVYGDIGTSPIYAF, VVSLIFWALTLVVTIKYVLFV, LILGVGICGAALFFGDAVITP, IVAPDLTPFVVPITVVILVTL, VAIVFGPIMALWFLALGASGL, FLMISPGIAFITVGAVFLAMT, WLWIVFPCLLLNYFGQAAFIL, MMPSFALLPMVLLATAATVIA, IYIPRVNLLLGLAVVILVLGF, AYGIAVTGNMLVTTVLLYIVM, ALPIIVGFLIIDIMFFGANII, and EGGWASIGIAAILVLIMWTWV.

This sequence belongs to the HAK/KUP transporter (TC 2.A.72) family.

The protein resides in the cell inner membrane. The enzyme catalyses K(+)(in) + H(+)(in) = K(+)(out) + H(+)(out). Transport of potassium into the cell. Likely operates as a K(+):H(+) symporter. The protein is Probable potassium transport system protein Kup of Brucella anthropi (strain ATCC 49188 / DSM 6882 / CCUG 24695 / JCM 21032 / LMG 3331 / NBRC 15819 / NCTC 12168 / Alc 37) (Ochrobactrum anthropi).